Here is a 142-residue protein sequence, read N- to C-terminus: Large ribosomal subunit protein uL11 (142 aa).

This sequence belongs to the universal ribosomal protein uL11 family. Part of the ribosomal stalk of the 50S ribosomal subunit. Interacts with L10 and the large rRNA to form the base of the stalk. L10 forms an elongated spine to which L12 dimers bind in a sequential fashion forming a multimeric L10(L12)X complex. In terms of processing, one or more lysine residues are methylated.

In terms of biological role, forms part of the ribosomal stalk which helps the ribosome interact with GTP-bound translation factors. In Serratia marcescens, this protein is Large ribosomal subunit protein uL11.